The sequence spans 115 residues: MARVKRGNVARKRRNKILRLARGFRGGNGTQFRTANQRVMKALCNAYRDRRRRKRDFRRLWIARINAAARINGVSYSRLMGGLKKADVRINRKMLAQLAVADPASFTTVVTAAKS.

This sequence belongs to the bacterial ribosomal protein bL20 family.

In terms of biological role, binds directly to 23S ribosomal RNA and is necessary for the in vitro assembly process of the 50S ribosomal subunit. It is not involved in the protein synthesizing functions of that subunit. This chain is Large ribosomal subunit protein bL20, found in Synechococcus sp. (strain CC9902).